The following is a 525-amino-acid chain: ATP synthase subunit alpha (525 aa).

171–178 (GDRQTGKS) is an ATP binding site.

The protein belongs to the ATPase alpha/beta chains family. F-type ATPases have 2 components, CF(1) - the catalytic core - and CF(0) - the membrane proton channel. CF(1) has five subunits: alpha(3), beta(3), gamma(1), delta(1), epsilon(1). CF(0) has three main subunits: a(1), b(2) and c(9-12). The alpha and beta chains form an alternating ring which encloses part of the gamma chain. CF(1) is attached to CF(0) by a central stalk formed by the gamma and epsilon chains, while a peripheral stalk is formed by the delta and b chains.

It localises to the cell inner membrane. It catalyses the reaction ATP + H2O + 4 H(+)(in) = ADP + phosphate + 5 H(+)(out). Produces ATP from ADP in the presence of a proton gradient across the membrane. The alpha chain is a regulatory subunit. This chain is ATP synthase subunit alpha, found in Flavobacterium johnsoniae (strain ATCC 17061 / DSM 2064 / JCM 8514 / BCRC 14874 / CCUG 350202 / NBRC 14942 / NCIMB 11054 / UW101) (Cytophaga johnsonae).